Consider the following 30-residue polypeptide: Toxic protein AapA1 (30 aa).

Belongs to the AapA toxin family.

Its subcellular location is the cell inner membrane. With respect to regulation, transcription of the aapA1 gene generates a full-length transcript whose folding impedes translation. Processing of the 3' end of the aapA1 message generates a shorter transcript that becomes translatable after a structural rearrangement. The processing also makes it more susceptible to forming dsRNA with IsoA1 which leads to duplex RNA degradation by RNase 3 (rnc). May be involved in response to oxidative stress. Toxic component of a type I toxin-antitoxin (TA) system. When overexpression is induced in situ in the absence of its cognate antisense RNA antitoxin IsoA1 it leads to cell growth arrest and cell death without lysis. Neutralized by IsoA1 RNA which forms an extensive duplex with the mRNA. Binds artificial prokaryotic and eukaryotic lipid membranes, with 30-fold higher affinity for prokaryotic membranes. Molecular dynamics suggests the peptide penetrates the membrane leading to lipid reorganization and thinning of the bilayer. Induction of toxin in the absence of antitoxin RNA causes a fast conversion of cells from spiral-shaped to coccoid forms; cells have no visible membrane defects and resemble wild-type 'aging coccoids'. Toxin causes a moderate decrease in membrane potential and ATP content and alterations in peptidoglycan muropeptide abundance; GlcNAc-MurNAc dipeptides increase while GlcNAc-MurNAc tripeptides decrease (i.e. a faster phenocopy of cell aging). Deletion of all 6 AapA/IsoA TA loci in strain B128 leads to slower than wild-type conversion of H2O2-treated cells to the coccoid form. This suggests oxidative stress triggers coccoid transformation via these type I TA systems, although other factors eventually drive the morphology change. The chain is Toxic protein AapA1 from Helicobacter pylori (strain ATCC 700392 / 26695) (Campylobacter pylori).